A 409-amino-acid polypeptide reads, in one-letter code: Regulator of Ty1 transposition protein 103 (409 aa).

Positions 1–135 (MPFSSEQFTT…DIERSLKTES (135 aa)) constitute a CID domain. A disordered region spans residues 250–409 (LNKNVDEDNI…IQDLLSKLAN (160 aa)). The span at 266-289 (GDGDDDDDDGDNDDDDDDDDDDKN) shows a compositional bias: acidic residues. Composition is skewed to basic and acidic residues over residues 307 to 323 (TDKKNEVVEKTDSEHKN), 337 to 363 (RTHDMIGHDDANDIPEKKVHLDSKTSE), and 370 to 380 (EDGHYELDIEG).

This sequence belongs to the UPF0400 (RTT103) family. Interacts with PCF11, RAI1, RAT1, RPO21 and RBP2.

The protein resides in the nucleus. Functionally, involved in transcription termination by RNA polymerase II and in regulation of Ty1 transposition. The chain is Regulator of Ty1 transposition protein 103 (RTT103) from Saccharomyces cerevisiae (strain ATCC 204508 / S288c) (Baker's yeast).